A 133-amino-acid chain; its full sequence is Ribonuclease VapC10 (133 aa).

A PINc domain is found at 2-119; the sequence is ILVDSDVLIA…NVWHFPMFEQ (118 aa). Asp-5 and Asp-92 together coordinate Mg(2+).

This sequence belongs to the PINc/VapC protein family. Requires Mg(2+) as cofactor.

Functionally, toxic component of a type II toxin-antitoxin (TA) system. An RNase. The cognate antitoxin is VapB10. This chain is Ribonuclease VapC10, found in Mycobacterium tuberculosis (strain CDC 1551 / Oshkosh).